Consider the following 145-residue polypeptide: D-aminoacyl-tRNA deacylase (145 aa).

A Gly-cisPro motif, important for rejection of L-amino acids motif is present at residues 137–138; that stretch reads GP.

It belongs to the DTD family. As to quaternary structure, homodimer.

Its subcellular location is the cytoplasm. It carries out the reaction glycyl-tRNA(Ala) + H2O = tRNA(Ala) + glycine + H(+). The enzyme catalyses a D-aminoacyl-tRNA + H2O = a tRNA + a D-alpha-amino acid + H(+). Its function is as follows. An aminoacyl-tRNA editing enzyme that deacylates mischarged D-aminoacyl-tRNAs. Also deacylates mischarged glycyl-tRNA(Ala), protecting cells against glycine mischarging by AlaRS. Acts via tRNA-based rather than protein-based catalysis; rejects L-amino acids rather than detecting D-amino acids in the active site. By recycling D-aminoacyl-tRNA to D-amino acids and free tRNA molecules, this enzyme counteracts the toxicity associated with the formation of D-aminoacyl-tRNA entities in vivo and helps enforce protein L-homochirality. The protein is D-aminoacyl-tRNA deacylase of Photobacterium profundum (strain SS9).